The sequence spans 241 residues: Zinc finger CCHC domain-containing protein 17 (241 aa).

The region spanning 16–88 is the S1 motif domain; it reads YTIFQGEVAM…DRIKVSLSMK (73 aa). Ser114 carries the phosphoserine modification. The CCHC-type zinc finger occupies 131–148; it reads TTCKKCGCKGHFAKDCFM. An N6-acetyllysine modification is found at Lys144. The disordered stretch occupies residues 161–241; sequence EEEEKEEAKS…KKKHKKKHKE (81 aa). The span at 166–178 shows a compositional bias: basic and acidic residues; sequence EEAKSAEFEKPDP. A compositionally biased stretch (basic residues) spans 182-198; sequence PSRKRKKEKKKKKHRDR. Ser183 bears the Phosphoserine mark. A compositionally biased stretch (basic and acidic residues) spans 211-225; that stretch reads DTGKRARHTSKDSKA. The span at 226–241 shows a compositional bias: basic residues; sequence AKKKKKKKKHKKKHKE.

Interacts with PNN. Associates with the 60S ribosomal subunit.

It is found in the nucleus. It localises to the nucleolus. This chain is Zinc finger CCHC domain-containing protein 17 (ZCCHC17), found in Homo sapiens (Human).